Consider the following 451-residue polypeptide: 2,4-dinitrotoluene dioxygenase system, large oxygenase component (451 aa).

In terms of domain architecture, Rieske spans 42 to 126; the sequence is WLFLTHDSLI…LQSVPFEKEL (85 aa). Cys-84, His-86, Cys-104, and His-107 together coordinate [2Fe-2S] cluster. Residues His-211, His-216, and Asp-365 each contribute to the Fe cation site.

It belongs to the bacterial ring-hydroxylating dioxygenase alpha subunit family. The 2,4-dinitrotoluene dioxygenase (DNTDO) multicomponent enzyme system is composed of an electron transfer component and a dioxygenase component (iron sulfur protein (ISP)). The electron transfer component is composed of a ferredoxin reductase (DntAa) and a ferredoxin (DntAb), and the dioxygenase component is formed of a large alpha subunit (DntAc) and a small beta subunit (DntAd). [2Fe-2S] cluster is required as a cofactor. It depends on Fe(2+) as a cofactor.

The enzyme catalyses 2,4-dinitrotoluene + NADH + O2 = 4-methyl-5-nitrocatechol + nitrite + NAD(+). In terms of biological role, component of the 2,4-dinitrotoluene dioxygenase (DNTDO) multicomponent enzyme system which catalyzes the incorporation of both atoms of molecular oxygen into 2,4-dinitrotoluene (DNT) to form 4-methyl-5-nitrocatechol (MNC) and nitrite. The alpha subunit has a catalytic role in the holoenzyme. Also able to convert naphthalene to cis-(1R,2S)-dihydroxy-1,2-dihydronaphthalene. The polypeptide is 2,4-dinitrotoluene dioxygenase system, large oxygenase component (Burkholderia sp. (strain RASC)).